The sequence spans 147 residues: Ribosome maturation factor RimP (147 aa).

The protein belongs to the RimP family.

It is found in the cytoplasm. Functionally, required for maturation of 30S ribosomal subunits. This Thermosipho melanesiensis (strain DSM 12029 / CIP 104789 / BI429) protein is Ribosome maturation factor RimP.